A 300-amino-acid chain; its full sequence is Ribonuclease HIII (300 aa).

The 218-residue stretch at 83-300 folds into the RNase H type-2 domain; that stretch reads IPIIGSDEVG…THKAQALLTK (218 aa). A divalent metal cation contacts are provided by Asp-89, Glu-90, and Asp-194.

The protein belongs to the RNase HII family. RnhC subfamily. It depends on Mn(2+) as a cofactor. Mg(2+) serves as cofactor.

It is found in the cytoplasm. The enzyme catalyses Endonucleolytic cleavage to 5'-phosphomonoester.. Functionally, endonuclease that specifically degrades the RNA of RNA-DNA hybrids. The protein is Ribonuclease HIII of Streptococcus pyogenes serotype M1.